Here is a 402-residue protein sequence, read N- to C-terminus: mRNA-capping enzyme subunit alpha (402 aa).

Lys67 (N6-GMP-lysine intermediate) is an active-site residue. A disordered region spans residues 374–402 (SVTKRKLDETSNDDAPAIKKVAKESEKEI).

This sequence belongs to the eukaryotic GTase family. In terms of assembly, heterodimer. The mRNA-capping enzyme is composed of two separate chains alpha and beta, respectively a mRNA guanylyltransferase and an mRNA 5'-triphosphate monophosphatase.

The protein resides in the nucleus. It catalyses the reaction a 5'-end diphospho-ribonucleoside in mRNA + GTP + H(+) = a 5'-end (5'-triphosphoguanosine)-ribonucleoside in mRNA + diphosphate. Its function is as follows. Second step of mRNA capping. Transfer of the GMP moiety of GTP to the 5'-end of RNA via an enzyme-GMP covalent reaction intermediate. This chain is mRNA-capping enzyme subunit alpha (ceg1), found in Schizosaccharomyces pombe (strain 972 / ATCC 24843) (Fission yeast).